A 277-amino-acid polypeptide reads, in one-letter code: Release factor glutamine methyltransferase (277 aa).

S-adenosyl-L-methionine contacts are provided by residues G117 to G121, D140, W168, and N183. N183–Y186 serves as a coordination point for substrate.

It belongs to the protein N5-glutamine methyltransferase family. PrmC subfamily.

It carries out the reaction L-glutaminyl-[peptide chain release factor] + S-adenosyl-L-methionine = N(5)-methyl-L-glutaminyl-[peptide chain release factor] + S-adenosyl-L-homocysteine + H(+). In terms of biological role, methylates the class 1 translation termination release factors RF1/PrfA and RF2/PrfB on the glutamine residue of the universally conserved GGQ motif. The polypeptide is Release factor glutamine methyltransferase (Shigella dysenteriae serotype 1 (strain Sd197)).